A 156-amino-acid polypeptide reads, in one-letter code: Small ribosomal subunit protein uS7 (156 aa).

The protein belongs to the universal ribosomal protein uS7 family. Part of the 30S ribosomal subunit. Contacts proteins S9 and S11.

In terms of biological role, one of the primary rRNA binding proteins, it binds directly to 16S rRNA where it nucleates assembly of the head domain of the 30S subunit. Is located at the subunit interface close to the decoding center, probably blocks exit of the E-site tRNA. The protein is Small ribosomal subunit protein uS7 of Shewanella sp. (strain W3-18-1).